Here is a 393-residue protein sequence, read N- to C-terminus: Acetate kinase (393 aa).

Asn-6 is a Mg(2+) binding site. Lys-13 contributes to the ATP binding site. A substrate-binding site is contributed by Arg-87. The active-site Proton donor/acceptor is Asp-143. ATP-binding positions include 203–207 (HLGNG), 278–280 (DMR), and 326–330 (GIGEN). Residue Glu-380 coordinates Mg(2+).

Belongs to the acetokinase family. Homodimer. The cofactor is Mg(2+). Mn(2+) is required as a cofactor.

The protein localises to the cytoplasm. The catalysed reaction is acetate + ATP = acetyl phosphate + ADP. It participates in metabolic intermediate biosynthesis; acetyl-CoA biosynthesis; acetyl-CoA from acetate: step 1/2. In terms of biological role, catalyzes the formation of acetyl phosphate from acetate and ATP. Can also catalyze the reverse reaction. The sequence is that of Acetate kinase from Mycoplasma mycoides subsp. mycoides SC (strain CCUG 32753 / NCTC 10114 / PG1).